The primary structure comprises 446 residues: Sensor-type histidine kinase PrrB (446 aa).

2 helical membrane passes run 19–39 (VVAT…VVWV) and 151–171 (LLIC…LAAF). The 51-residue stretch at 172–222 (AVRPFKQLAEQTRSIDAGDEAPRVEVHGASEAIEIAEAMRGMLQRIWNEQN) folds into the HAMP domain. The 210-residue stretch at 237–446 (VSSHELRTPL…RLVLRLPGPS (210 aa)) folds into the Histidine kinase domain. Histidine 240 carries the phosphohistidine; by autocatalysis modification.

Autophosphorylated.

It localises to the cell membrane. The catalysed reaction is ATP + protein L-histidine = ADP + protein N-phospho-L-histidine.. In terms of biological role, member of the two-component regulatory system PrrB/PrrA that is involved specifically in early intracellular multiplication of Mycobacterium and is essential for its viability. Functions as a sensor protein kinase which is autophosphorylated at a histidine residue and transfers its phosphate group to the conserved aspartic acid residue in the regulatory domain of PrrA. In turn, PrrA binds to the upstream promoter regions of target genes including itself to positively regulate their expression. In Mycobacterium bovis (strain ATCC BAA-935 / AF2122/97), this protein is Sensor-type histidine kinase PrrB (prrB).